A 75-amino-acid chain; its full sequence is Putative UPF0377 protein YAL067W-A (75 aa).

It belongs to the UPF0377 family.

The polypeptide is Putative UPF0377 protein YAL067W-A (Saccharomyces cerevisiae (strain ATCC 204508 / S288c) (Baker's yeast)).